Here is a 259-residue protein sequence, read N- to C-terminus: Snake venom serine proteinase 2 (259 aa).

The signal sequence occupies residues 1–18 (MVLIRVLANLLILQLSYA). The propeptide occupies 19–24 (QKSSEL). The Peptidase S1 domain occupies 25 to 250 (IFGGRPCNRN…HLDWIQSIIA (226 aa)). Disulfide bonds link Cys31–Cys162, Cys49–Cys65, Cys97–Cys257, Cys141–Cys211, Cys173–Cys190, and Cys201–Cys226. Residues His64 and Asp109 each act as charge relay system in the active site. Ser205 functions as the Charge relay system in the catalytic mechanism.

It belongs to the peptidase S1 family. Snake venom subfamily. As to quaternary structure, monomer. Expressed by the venom gland.

Its subcellular location is the secreted. Snake venom serine protease that may act in the hemostasis system of the prey. In Crotalus adamanteus (Eastern diamondback rattlesnake), this protein is Snake venom serine proteinase 2.